A 289-amino-acid polypeptide reads, in one-letter code: Vesicular-fusion protein SEC17 (289 aa).

Belongs to the SNAP family.

It localises to the membrane. Its function is as follows. Required for vesicular transport between the endoplasmic reticulum and the Golgi apparatus. This is Vesicular-fusion protein SEC17 (SEC17) from Coprinopsis cinerea (strain Okayama-7 / 130 / ATCC MYA-4618 / FGSC 9003) (Inky cap fungus).